Consider the following 126-residue polypeptide: Large ribosomal subunit protein bL12 (126 aa).

Belongs to the bacterial ribosomal protein bL12 family. As to quaternary structure, homodimer. Part of the ribosomal stalk of the 50S ribosomal subunit. Forms a multimeric L10(L12)X complex, where L10 forms an elongated spine to which 2 to 4 L12 dimers bind in a sequential fashion. Binds GTP-bound translation factors.

Its function is as follows. Forms part of the ribosomal stalk which helps the ribosome interact with GTP-bound translation factors. Is thus essential for accurate translation. The protein is Large ribosomal subunit protein bL12 of Tropheryma whipplei (strain TW08/27) (Whipple's bacillus).